The chain runs to 745 residues: 1,4-alpha-glucan branching enzyme GlgB (745 aa).

Aspartate 416 functions as the Nucleophile in the catalytic mechanism. The active-site Proton donor is glutamate 469.

It belongs to the glycosyl hydrolase 13 family. GlgB subfamily. In terms of assembly, monomer.

The catalysed reaction is Transfers a segment of a (1-&gt;4)-alpha-D-glucan chain to a primary hydroxy group in a similar glucan chain.. Its pathway is glycan biosynthesis; glycogen biosynthesis. Catalyzes the formation of the alpha-1,6-glucosidic linkages in glycogen by scission of a 1,4-alpha-linked oligosaccharide from growing alpha-1,4-glucan chains and the subsequent attachment of the oligosaccharide to the alpha-1,6 position. In Shewanella sp. (strain W3-18-1), this protein is 1,4-alpha-glucan branching enzyme GlgB.